The primary structure comprises 491 residues: La-related protein 6 (491 aa).

A disordered region spans residues 1–87 (MAQSGGEARP…REDLEQEWKP (87 aa)). Residue A2 is modified to N-acetylalanine. Positions 24–37 (EAEDVDELEDEEEG) are enriched in acidic residues. Phosphoserine is present on residues S56 and S58. The HTH La-type RNA-binding domain occupies 86-177 (KPPDEELIKK…RRTTPVPLFP (92 aa)). The 113-residue stretch at 184 to 296 (KMLLVYDLYL…KAVLIGMKPP (113 aa)) folds into the RRM domain. A Nuclear export signal motif is present at residues 186 to 193 (LLVYDLYL). Disordered stretches follow at residues 293–403 (MKPP…EEGR) and 423–491 (SSVT…RACV). Positions 296 to 302 (PKKKPAK) match the Nuclear localization signal motif. The span at 332–346 (DESSANSSSDPESNP) shows a compositional bias: low complexity. Composition is skewed to polar residues over residues 359–386 (NKLSPSGHQNLFLSPNASPCTSPWSSPL) and 444–453 (QEKSPGTSPL). An SUZ-C domain is found at 427 to 485 (PSGSPWVRRRRQAEMGTQEKSPGTSPLLSRKMQTADGLPVGVLRLPRGPDNTRGFHGHE). The segment covering 482 to 491 (HGHERSRACV) has biased composition (basic and acidic residues).

As to quaternary structure, interacts (via the HTH domain) with VIM/vimentin. Interacts (via C-terminus) with non-muscle myosin MYH10. Interacts (via C-terminus) with DHX9. As to expression, expressed in numerous tissues.

The protein resides in the cytoplasm. It is found in the nucleus. Functionally, regulates the coordinated translation of type I collagen alpha-1 and alpha-2 mRNAs, CO1A1 and CO1A2. Stabilizes mRNAs through high-affinity binding of a stem-loop structure in their 5' UTR. This regulation requires VIM and MYH10 filaments, and the helicase DHX9. This chain is La-related protein 6 (LARP6), found in Homo sapiens (Human).